We begin with the raw amino-acid sequence, 334 residues long: Mitochondrial glycine transporter (334 aa).

Solcar repeat units lie at residues 10 to 94, 127 to 211, and 234 to 318; these read SKSS…IRQA, LSNT…FKRR, and RAAA…LIMR. Helical transmembrane passes span 16–41, 69–95, 133–158, 186–209, 238–264, and 293–311; these read FVAGLGSGVLSAALLQPIDLLKTRVQ, GTVPSALRTGFGSALYFSTLNAIRQAA, LLAGGVARGFAGFVLMPLTVIKVRYE, GFGATALRDAPYAGLYVLLYEQFK, VNFSSGVLAAVACSVVSNPFDAVKTRI, and GLGLRMSRKALSSALAWTL.

Belongs to the mitochondrial carrier (TC 2.A.29) family. SLC25A38 subfamily.

The protein localises to the mitochondrion inner membrane. It carries out the reaction glycine(in) = glycine(out). Its function is as follows. Mitochondrial glycine transporter that imports glycine into the mitochondrial matrix. Plays an important role in providing glycine for the first enzymatic step in heme biosynthesis, the condensation of glycine with succinyl-CoA to produce 5-aminolevulinate (ALA) in the mitochondrial matrix. The protein is Mitochondrial glycine transporter of Pyricularia oryzae (strain 70-15 / ATCC MYA-4617 / FGSC 8958) (Rice blast fungus).